A 134-amino-acid chain; its full sequence is Histone H3-like centromeric protein A (134 aa).

The segment covering 1–14 (MGPRRKPQTPRRRP) has biased composition (basic residues). The disordered stretch occupies residues 1–34 (MGPRRKPQTPRRRPSSPAPGPSRQSSSVGSQTLR). Residue Gly-2 is modified to N,N,N-trimethylglycine. Phosphoserine occurs at positions 16 and 22. Residues 34–48 (RRRQKFMWLKEIKTL) are important for flexibility of DNA ends that protrude from nucleosomes. An H3-like region spans residues 35–134 (RRQKFMWLKE…RIRGFEGGLP (100 aa)). Position 62 is a phosphoserine (Ser-62). The segment at 69 to 110 (CEKFSRGVDFWWQAQALLALQEAAEAFLIHLFEDAYLLSLHA) is CATD.

The protein belongs to the histone H3 family. Component of centromeric nucleosomes, where DNA is wrapped around a histone octamer core. The octamer contains two molecules each of H2A, H2B, CENPA and H4 assembled in one CENPA-H4 heterotetramer and two H2A-H2B heterodimers. CENPA modulates the DNA-binding characteristics of nucleosomes so that protruding DNA ends have higher flexibility than in nucleosomes containing conventional histone H3. Inhibits binding of histone H1 to nucleosomes, since histone H1 binds preferentially to rigid DNA linkers that protrude from nucleosomes. Nucleosomes containing CENPA also contain histone H2A variants such as MACROH2A and H2A.Z/H2AZ1. The CENPA-H4 heterotetramer is more compact and structurally more rigid than corresponding H3-H4 heterotetramers. Can assemble into nucleosomes that contain both CENPA and histone H3.3; these nucleosomes interact with a single CENPC chain. Heterotrimer composed of HJURP, CENPA and histone H4, where HJURP interacts with the dimer formed by CENPA and histone H4 and prevents tetramerization of CENPA and H4. Component of the CENPA-NAC complex, at least composed of CENPA, CENPC, CENPH, CENPM, CENPN, CENPT and CENPU. Interacts (via CATD domain) with HJURP; the interaction is direct and is required for its localization to centromeres. Interacts with CENPC, CENPN and CENPT; interaction is direct. Part of a centromere complex consisting of CENPA, CENPT and CENPW. Identified in centromere complexes containing histones H2A, H2B and H4, and at least CENPA, CENPB, CENPC, CENPT, CENPN, HJURP, SUPT16H, SSRP1 and RSF1. Can self-associate. The CENPA-H4 heterotetramer can bind DNA by itself (in vitro). Interacts with CDK1, PPP1CA and RBBP7. In terms of processing, poly-ADP-ribosylated by PARP1. Post-translationally, trimethylated by NTMT1 at the N-terminal glycine after cleavage of Met-1. Methylation is low before incorporation into nucleosomes and increases with cell cycle progression, with the highest levels in mitotic nucleosomes. Phosphorylated by CDK1 at Ser-62 during early mitosis; this abolishes association with chromatin and centromeres, prevents interaction with HJURP and thereby prevents premature assembly of CENPA into centromeres. Dephosphorylated at Ser-62 by PPP1CA during late mitosis.

The protein localises to the nucleus. Its subcellular location is the chromosome. The protein resides in the centromere. In terms of biological role, histone H3-like nucleosomal protein that is specifically found in centromeric nucleosomes. Replaces conventional H3 in the nucleosome core of centromeric chromatin that serves as an assembly site for the inner kinetochore. The presence of CENPA subtly modifies the nucleosome structure and the way DNA is wrapped around the nucleosome and gives rise to protruding DNA ends that are less well-ordered and rigid compared to nucleosomes containing histone H3. May serve as an epigenetic mark that propagates centromere identity through replication and cell division. Required for recruitment and assembly of kinetochore proteins, and as a consequence required for progress through mitosis, chromosome segregation and cytokinesis. In Mus musculus (Mouse), this protein is Histone H3-like centromeric protein A (Cenpa).